Reading from the N-terminus, the 393-residue chain is Proteasome-activating nucleotidase (393 aa).

Positions 14 to 53 (SDEVQLVRLLEEKIKSLQIEIENLRKELNYYKAEMEKMLS) form a coiled coil. Residues 178–183 (GTGKTM) and Tyr-317 contribute to the ATP site. The interval 391–393 (KYS) is docks into pockets in the proteasome alpha-ring to cause gate opening.

The protein belongs to the AAA ATPase family. As to quaternary structure, homohexamer. The hexameric complex has a two-ring architecture resembling a top hat that caps the 20S proteasome core at one or both ends. Upon ATP-binding, the C-terminus of PAN interacts with the alpha-rings of the proteasome core by binding to the intersubunit pockets.

Its subcellular location is the cytoplasm. Functionally, ATPase which is responsible for recognizing, binding, unfolding and translocation of substrate proteins into the archaeal 20S proteasome core particle. Is essential for opening the gate of the 20S proteasome via an interaction with its C-terminus, thereby allowing substrate entry and access to the site of proteolysis. Thus, the C-termini of the proteasomal ATPase function like a 'key in a lock' to induce gate opening and therefore regulate proteolysis. Unfolding activity requires energy from ATP hydrolysis, whereas ATP binding alone promotes ATPase-20S proteasome association which triggers gate opening, and supports translocation of unfolded substrates. The polypeptide is Proteasome-activating nucleotidase (Saccharolobus islandicus (strain M.16.27) (Sulfolobus islandicus)).